The following is a 756-amino-acid chain: Centromere protein I (756 aa).

Residues Met1–Gln60 are disordered. 2 stretches are compositionally biased toward polar residues: residues Val10–Ser28 and Asp35–Pro50.

It belongs to the CENP-I/CTF3 family. As to quaternary structure, component of the CENPA-CAD complex, composed of CENPI, CENPK, CENPL, CENPO, CENPP, CENPQ, CENPR and CENPS. The CENPA-CAD complex interacts with the CENPA-NAC complex, at least composed of CENPA, CENPC, CENPH, CENPM, CENPN, CENPT and CENPU. Interacts with SENP6. Post-translationally, sumoylated. Sumoylated form can be polyubiquitinated by RNF4, leading to its degradation. Desumoylation by SENP6 prevents its degradation.

It localises to the nucleus. It is found in the chromosome. Its subcellular location is the centromere. Functionally, component of the CENPA-CAD (nucleosome distal) complex, a complex recruited to centromeres which is involved in assembly of kinetochore proteins, mitotic progression and chromosome segregation. May be involved in incorporation of newly synthesized CENPA into centromeres via its interaction with the CENPA-NAC complex. Required for the localization of CENPF, MAD1L1 and MAD2 (MAD2L1 or MAD2L2) to kinetochores. Involved in the response of gonadal tissues to follicle-stimulating hormone. The protein is Centromere protein I (CENPI) of Homo sapiens (Human).